The sequence spans 151 residues: 3-hydroxyacyl-[acyl-carrier-protein] dehydratase FabZ (151 aa).

Residue H54 is part of the active site.

It belongs to the thioester dehydratase family. FabZ subfamily.

It is found in the cytoplasm. It catalyses the reaction a (3R)-hydroxyacyl-[ACP] = a (2E)-enoyl-[ACP] + H2O. Functionally, involved in unsaturated fatty acids biosynthesis. Catalyzes the dehydration of short chain beta-hydroxyacyl-ACPs and long chain saturated and unsaturated beta-hydroxyacyl-ACPs. In Salmonella agona (strain SL483), this protein is 3-hydroxyacyl-[acyl-carrier-protein] dehydratase FabZ.